The sequence spans 315 residues: Replication factor C small subunit (315 aa).

ATP is bound at residue 43-50 (GSPGVGKT).

This sequence belongs to the activator 1 small subunits family. RfcS subfamily. In terms of assembly, heteromultimer composed of small subunits (RfcS) and large subunits (RfcL).

In terms of biological role, part of the RFC clamp loader complex which loads the PCNA sliding clamp onto DNA. The sequence is that of Replication factor C small subunit from Methanococcus maripaludis (strain DSM 14266 / JCM 13030 / NBRC 101832 / S2 / LL).